The primary structure comprises 309 residues: Protein FdhE homolog (309 aa).

A disordered region spans residues Met-1–His-22.

This sequence belongs to the FdhE family.

Its subcellular location is the cytoplasm. In terms of biological role, necessary for formate dehydrogenase activity. The polypeptide is Protein FdhE homolog (Pectobacterium carotovorum subsp. carotovorum (strain PC1)).